Here is a 298-residue protein sequence, read N- to C-terminus: 3'-5' exonuclease crn-4 (298 aa).

Positions 12-192 (LILDFETTSD…DDCLNIATIL (181 aa)) constitute an Exonuclease domain. Mg(2+)-binding residues include Asp-15, Glu-17, and Asp-184. Residues Cys-210, Cys-260, Cys-263, and Cys-270 each coordinate Zn(2+).

Homodimer (via C-terminus). Interacts with crn-5; interaction promotes the DNase activity of crn-4. Interacts with cps-6, crn-1 and cyn-13. Mg(2+) is required as a cofactor.

With respect to regulation, exonuclease activity is inhibited in vitro by pontacyl violet 6R (PV6R), p-chloromercuriphenyl sulfonate (PCMPS), 5,5'-dithiobis(2-nitrobenzoic acid) (DTNB), aurintricarboxylic acid (ATA), 2-morpholin-4-ylethanesulfonate (MES), 4-[(4,6-dichloro-1,3,5-triazin-2-yl)amino]-2-(3-hydroxy-6-oxoxanthen-9-yl)benzoic acid (DR396) and fmoc-d-Cha-OH (FDCO). Interaction with ssRNA is reduced in vitro by PV6R. Functionally, possesses 3'-&gt;5' exoribonuclease activity in digestion of DNA and RNA. Cleaves nucleic acid substrates with efficiencies in the following order: single-stranded RNA (ssRNA) &gt; double-stranded DNA (dsDNA) &gt; single-stranded DNA (ssDNA). Involved in apoptotic DNA degradation. The chain is 3'-5' exonuclease crn-4 (crn-4) from Caenorhabditis elegans.